The sequence spans 179 residues: Large ribosomal subunit protein uL5 (179 aa).

This sequence belongs to the universal ribosomal protein uL5 family. Part of the 50S ribosomal subunit; part of the 5S rRNA/L5/L18/L25 subcomplex. Contacts the 5S rRNA and the P site tRNA. Forms a bridge to the 30S subunit in the 70S ribosome.

Functionally, this is one of the proteins that bind and probably mediate the attachment of the 5S RNA into the large ribosomal subunit, where it forms part of the central protuberance. In the 70S ribosome it contacts protein S13 of the 30S subunit (bridge B1b), connecting the 2 subunits; this bridge is implicated in subunit movement. Contacts the P site tRNA; the 5S rRNA and some of its associated proteins might help stabilize positioning of ribosome-bound tRNAs. The polypeptide is Large ribosomal subunit protein uL5 (Pseudomonas fluorescens (strain SBW25)).